The chain runs to 299 residues: Phosphatidylserine decarboxylase proenzyme (299 aa).

Residues Asp115, His171, and Ser258 each act as charge relay system; for autoendoproteolytic cleavage activity in the active site. Ser258 serves as the catalytic Schiff-base intermediate with substrate; via pyruvic acid; for decarboxylase activity. At Ser258 the chain carries Pyruvic acid (Ser); by autocatalysis.

It belongs to the phosphatidylserine decarboxylase family. PSD-B subfamily. Prokaryotic type II sub-subfamily. In terms of assembly, heterodimer of a large membrane-associated beta subunit and a small pyruvoyl-containing alpha subunit. The cofactor is pyruvate. In terms of processing, is synthesized initially as an inactive proenzyme. Formation of the active enzyme involves a self-maturation process in which the active site pyruvoyl group is generated from an internal serine residue via an autocatalytic post-translational modification. Two non-identical subunits are generated from the proenzyme in this reaction, and the pyruvate is formed at the N-terminus of the alpha chain, which is derived from the carboxyl end of the proenzyme. The autoendoproteolytic cleavage occurs by a canonical serine protease mechanism, in which the side chain hydroxyl group of the serine supplies its oxygen atom to form the C-terminus of the beta chain, while the remainder of the serine residue undergoes an oxidative deamination to produce ammonia and the pyruvoyl prosthetic group on the alpha chain. During this reaction, the Ser that is part of the protease active site of the proenzyme becomes the pyruvoyl prosthetic group, which constitutes an essential element of the active site of the mature decarboxylase.

It is found in the cell membrane. It catalyses the reaction a 1,2-diacyl-sn-glycero-3-phospho-L-serine + H(+) = a 1,2-diacyl-sn-glycero-3-phosphoethanolamine + CO2. Its pathway is phospholipid metabolism; phosphatidylethanolamine biosynthesis; phosphatidylethanolamine from CDP-diacylglycerol: step 2/2. In terms of biological role, catalyzes the formation of phosphatidylethanolamine (PtdEtn) from phosphatidylserine (PtdSer). The sequence is that of Phosphatidylserine decarboxylase proenzyme from Chlamydia caviae (strain ATCC VR-813 / DSM 19441 / 03DC25 / GPIC) (Chlamydophila caviae).